Here is a 104-residue protein sequence, read N- to C-terminus: Small ribosomal subunit protein uS10 (104 aa).

The protein belongs to the universal ribosomal protein uS10 family. In terms of assembly, part of the 30S ribosomal subunit.

Functionally, involved in the binding of tRNA to the ribosomes. The polypeptide is Small ribosomal subunit protein uS10 (Buchnera aphidicola subsp. Baizongia pistaciae (strain Bp)).